A 178-amino-acid polypeptide reads, in one-letter code: Nuclear transcription factor Y subunit B-2 (178 aa).

Residues 39–45 (LPIANIS) mediate DNA binding. The interval 66 to 77 (LQECVSEFISFV) is subunit association domain (SAD). The tract at residues 131–156 (SSKAGDGSVKKDTIGPHSGASSSSAQ) is disordered.

The protein belongs to the NFYB/HAP3 subunit family. Heterotrimeric transcription factor composed of three components, NF-YA, NF-YB and NF-YC. NF-YB and NF-YC must interact and dimerize for NF-YA association and DNA binding. Interacts with NFYC4 and NFYC6. Ubiquitous.

Its subcellular location is the nucleus. In terms of biological role, component of the NF-Y/HAP transcription factor complex. The NF-Y complex stimulates the transcription of various genes by recognizing and binding to a CCAAT motif in promoters. May regulate the expression of photosynthetic genes, and may be involved in chloroplast and amyloplast development. This is Nuclear transcription factor Y subunit B-2 (NFYB2) from Oryza sativa subsp. japonica (Rice).